A 248-amino-acid chain; its full sequence is 3-deoxy-manno-octulosonate cytidylyltransferase (248 aa).

The protein belongs to the KdsB family.

It is found in the cytoplasm. The enzyme catalyses 3-deoxy-alpha-D-manno-oct-2-ulosonate + CTP = CMP-3-deoxy-beta-D-manno-octulosonate + diphosphate. It functions in the pathway nucleotide-sugar biosynthesis; CMP-3-deoxy-D-manno-octulosonate biosynthesis; CMP-3-deoxy-D-manno-octulosonate from 3-deoxy-D-manno-octulosonate and CTP: step 1/1. Its pathway is bacterial outer membrane biogenesis; lipopolysaccharide biosynthesis. In terms of biological role, activates KDO (a required 8-carbon sugar) for incorporation into bacterial lipopolysaccharide in Gram-negative bacteria. This chain is 3-deoxy-manno-octulosonate cytidylyltransferase, found in Chlorobaculum tepidum (strain ATCC 49652 / DSM 12025 / NBRC 103806 / TLS) (Chlorobium tepidum).